The sequence spans 121 residues: MADLNSPIQYLKDDFKDQTSIGSLEYDENSDTMIPSFAAGLENYEPIPSPTTSSSLYSHLTHNMEKIAEEDDINFLHDTREFTSLVPDEADNKPEDDEESGGAKPKKKKHLFPKLSSHKSK.

Position 2 is an N-acetylalanine; by host (A2). Residues 84-121 form a disordered region; sequence SLVPDEADNKPEDDEESGGAKPKKKKHLFPKLSSHKSK. The segment covering 104–121 has biased composition (basic residues); that stretch reads KPKKKKHLFPKLSSHKSK.

The protein belongs to the asfivirus structural protein p14.5 family. In terms of assembly, interacts with the major capsid protein. Interacts with host IRF3; this interaction interferes with the recruitment of IRF3 to TBK1. In terms of processing, acetylated.

It is found in the virion. Structural protein required for transport of intracellular particles from the assembly sites to the plasma membrane. Binds to both ssDNA and dsDNA. Suppressed the activation of the cGAS/STING pathway by interfering with the recruitment of IRF3 to TBK1, which in turn suppresses IRF3 phosphorylation, decreasing interferon production. This is Protein p14.5 from African swine fever virus (isolate Pig/Kenya/KEN-50/1950) (ASFV).